Consider the following 174-residue polypeptide: Calcineurin subunit B (174 aa).

4 consecutive EF-hand domains span residues 21-56, 60-88, 90-125, and 131-166; these read EEIERIRKRFIKIDANQSGSIDRNEFLSIPSVASNP, RLFSVVDEDGGGDVDFQEFINSLSVFSVH, NKEEKLKFAFKIYDIDRDGYISNGELYLVLKMMVGT, and QLQQIVDKTIMEVDKDRDGKISFEEFKDIVSGSNVT. Ca(2+) is bound by residues Asp-34, Asn-36, Ser-38, Ser-40, Glu-45, Asp-66, Asp-68, Asp-72, Glu-77, Asp-103, Asp-105, Asp-107, Tyr-109, Glu-114, Asp-144, Asp-146, Asp-148, Lys-150, and Glu-155.

Belongs to the calcineurin regulatory subunit family. Composed of a catalytic subunit (A) and a regulatory subunit (B).

Regulatory subunit of calcineurin, a calcium-dependent, calmodulin stimulated protein phosphatase. Confers calcium sensitivity. This is Calcineurin subunit B (cnb1) from Schizosaccharomyces pombe (strain 972 / ATCC 24843) (Fission yeast).